Here is a 540-residue protein sequence, read N- to C-terminus: Extracellular matrix protein 1 (540 aa).

The first 19 residues, 1–19 (MGTTARAALVLTYLAVASA), serve as a signal peptide directing secretion. Disordered regions lie at residues 41–85 (VGYA…EATP) and 120–175 (LQHP…PSPD). Composition is skewed to polar residues over residues 71–85 (GQSQ…EATP) and 146–156 (NAAQHCQQDRS). Repeat copies occupy residues 150-279 (HCQQ…QPHY) and 283-405 (ACPS…YPNY). A 2 X approximate repeats region spans residues 150 to 405 (HCQQDRSQGG…FARRAPYPNY (256 aa)). Residue N354 is glycosylated (N-linked (GlcNAc...) asparagine). N444 is a glycosylation site (N-linked (GlcNAc...) (complex) asparagine). The disordered stretch occupies residues 515 to 540 (ENAKGQGEQGSTGGTNISSTSEPKEE). The span at 528 to 540 (GTNISSTSEPKEE) shows a compositional bias: low complexity. A glycan (N-linked (GlcNAc...) asparagine) is linked at N530.

Interacts (via C-terminus) with HSPG2 (via C-terminus). Interacts with EFEMP1/FBLN3 and LAMB3. Interacts with MMP9. Expressed in breast cancer tissues. Little or no expression observed in normal breast tissues. Expressed in skin; wide expression is observed throughout the dermis with minimal expression in the epidermis.

The protein localises to the secreted. It localises to the extracellular space. The protein resides in the extracellular matrix. Its function is as follows. Involved in endochondral bone formation as negative regulator of bone mineralization. Stimulates the proliferation of endothelial cells and promotes angiogenesis. Inhibits MMP9 proteolytic activity. The protein is Extracellular matrix protein 1 (ECM1) of Homo sapiens (Human).